Reading from the N-terminus, the 197-residue chain is A-kinase anchor protein 14 (197 aa).

Polar residues-rich tracts occupy residues 1–11 and 19–29; these read MSETQNSTSQK and AASQTMPNTQD. The segment at 1–29 is disordered; that stretch reads MSETQNSTSQKAMDEDNKAASQTMPNTQD. The RII-binding stretch occupies residues 35–52; the sequence is ELTQVALALVEDVINYAV.

In terms of assembly, binds to type II regulatory subunits (RII). In terms of tissue distribution, present in cilia (at protein level). Expressed in tissues containing axoneme-based organelles (cilia and/or flagella): trachea and testis. Highly expressed in airway cilia.

It localises to the cytoplasm. Its function is as follows. Binds to type II regulatory subunits of protein kinase A and anchors/targets them. This is A-kinase anchor protein 14 (AKAP14) from Homo sapiens (Human).